A 219-amino-acid chain; its full sequence is Ras-like protein 1 (219 aa).

15 to 22 (GDGGVGKS) provides a ligand contact to GTP. The Effector region signature appears at 37–45 (YDPTIEDSY). GTP contacts are provided by residues 62 to 66 (DTAGQ) and 121 to 124 (NKCD). Cys216 carries the post-translational modification Cysteine methyl ester. A lipid anchor (S-farnesyl cysteine) is attached at Cys216. A propeptide spans 217 to 219 (VIC) (removed in mature form).

This sequence belongs to the small GTPase superfamily. Ras family. In terms of assembly, scd1, scd2, cdc42, and ras1, in its GTP-bound state, act cooperatively to form a protein complex. Palmitoylated by the erf2-erf4 complex.

It localises to the cell membrane. The enzyme catalyses GTP + H2O = GDP + phosphate + H(+). Alternates between an inactive form bound to GDP and an active form bound to GTP. Activated by a guanine nucleotide-exchange factor (GEF) and inactivated by a GTPase-activating protein (GAP). Participates in the process of sexual differentiation and the determination of cell shape. Essential for mating and for recognition of the mating pheromone, but not for vegetative growth. Does not regulate the intracellular cAMP level. Regulates two downstream pathways, namely the byr2/byr1/spk1 mitogen-activated protein kinase cascade and the cdc42 small G protein pathway. The former is relevant to mating and sporulation, whereas the latter is relevant to mating, cell growth and cell morphology. The chain is Ras-like protein 1 (ras1) from Schizosaccharomyces pombe (strain 972 / ATCC 24843) (Fission yeast).